The primary structure comprises 303 residues: Uricase (303 aa).

Catalysis depends on charge relay system residues lysine 12 and threonine 60. Residues threonine 60, aspartate 61, phenylalanine 162, arginine 179, valine 234, glutamine 235, and asparagine 261 each contribute to the urate site. The active-site Charge relay system is the histidine 263. Positions 301–303 match the Microbody targeting signal motif; sequence TKL.

It belongs to the uricase family.

It localises to the peroxisome. The enzyme catalyses urate + O2 + H2O = 5-hydroxyisourate + H2O2. It functions in the pathway purine metabolism; urate degradation; (S)-allantoin from urate: step 1/3. Catalyzes the oxidation of uric acid to 5-hydroxyisourate, which is further processed to form (S)-allantoin. The sequence is that of Uricase from Cyberlindnera jadinii (Torula yeast).